We begin with the raw amino-acid sequence, 476 residues long: Stromelysin-2 (476 aa).

Residues 1-17 (MEPLAILVLLCFPICSA) form the signal peptide. Positions 18–99 (YPLHGAVRQD…PRCGVPDVGG (82 aa)) are cleaved as a propeptide — activation peptide. A Cysteine switch motif is present at residues 90–97 (PRCGVPDV). Residues C92, H168, D170, H183, H196, and H218 each contribute to the Zn(2+) site. E219 is a catalytic residue. 2 residues coordinate Zn(2+): H222 and H228. 4 Hemopexin repeats span residues 286–335 (PVKC…WPSL), 336–382 (PSGL…GFPP), 384–432 (VKKI…FPGI), and 433–476 (EPQV…WLLC). C289 and C476 are disulfide-bonded.

Belongs to the peptidase M10A family. The cofactor is Zn(2+). Ca(2+) is required as a cofactor.

It localises to the secreted. The protein localises to the extracellular space. The protein resides in the extracellular matrix. It catalyses the reaction Similar to stromelysin 1, but action on collagen types III, IV and V is weak.. Functionally, can degrade fibronectin, gelatins of type I, III, IV, and V; weakly collagens III, IV, and V. Activates procollagenase. This Rattus norvegicus (Rat) protein is Stromelysin-2 (Mmp10).